Here is a 143-residue protein sequence, read N- to C-terminus: Putative complexin-1 (143 aa).

Residues 15-71 (NEVTGGLGLKDDGGEKTETGEDPEVVAARLEQEERRKEKHRKMEQEREKMRQGIRDK) form a disordered region. Composition is skewed to basic and acidic residues over residues 23–33 (LKDDGGEKTET) and 44–71 (LEQE…IRDK). Residues 40–71 (VAARLEQEERRKEKHRKMEQEREKMRQGIRDK) are a coiled coil.

This sequence belongs to the complexin/synaphin family.

It is found in the cytoplasm. Its subcellular location is the cytosol. In terms of biological role, positively regulates a late step in synaptic vesicle exocytosis. This is Putative complexin-1 (cpx-1) from Caenorhabditis briggsae.